The sequence spans 473 residues: Suppressor of SWI4 1 homolog (473 aa).

Positions Pro-29–Glu-292 constitute a Brix domain. Phosphoserine occurs at positions 238 and 240. The disordered stretch occupies residues Ala-323–Ala-473. Over residues Gln-324–Gln-334 the composition is skewed to low complexity. Residues Arg-335–Lys-352 are compositionally biased toward basic and acidic residues. Ser-359 bears the Phosphoserine mark. Residues Leu-375–Glu-388 are compositionally biased toward acidic residues. Over residues Lys-409–Arg-421 the composition is skewed to basic residues. Positions Trp-422–Ser-443 are enriched in basic and acidic residues. N6-acetyllysine is present on Lys-438. The segment covering Gly-462–Ala-473 has biased composition (basic residues).

As to expression, widely expressed.

The protein resides in the nucleus. It is found in the nucleolus. In terms of biological role, may have a role in cell growth. This chain is Suppressor of SWI4 1 homolog (PPAN), found in Homo sapiens (Human).